The sequence spans 224 residues: uncharacterized protein (224 aa).

Asp-52 is a catalytic residue.

Belongs to the pseudouridine synthase RluA family.

It carries out the reaction a uridine in RNA = a pseudouridine in RNA. This is an uncharacterized protein from Haemophilus influenzae (strain ATCC 51907 / DSM 11121 / KW20 / Rd).